The sequence spans 175 residues: Keratin-associated protein 13-2 (175 aa).

5 tandem repeats follow at residues 46-55 (CQLGSSLYRG), 56-65 (CQEICWEPTS), 66-75 (CQTSYVESSP), 76-85 (CQTSCYRPRT), and 92-101 (CKTTYSGSLG). The 5 X 10 AA approximate repeats stretch occupies residues 46 to 101 (CQLGSSLYRGCQEICWEPTSCQTSYVESSPCQTSCYRPRTSLLCSPCKTTYSGSLG).

It belongs to the PMG family. As to quaternary structure, interacts with hair keratins.

In terms of biological role, in the hair cortex, hair keratin intermediate filaments are embedded in an interfilamentous matrix, consisting of hair keratin-associated proteins (KRTAP), which are essential for the formation of a rigid and resistant hair shaft through their extensive disulfide bond cross-linking with abundant cysteine residues of hair keratins. The matrix proteins include the high-sulfur and high-glycine-tyrosine keratins. The polypeptide is Keratin-associated protein 13-2 (KRTAP13-2) (Homo sapiens (Human)).